The following is a 161-amino-acid chain: Cell wall protein YLR042C (161 aa).

The N-terminal stretch at 1–24 (MKISQFGSLAFAPIVLLQLFIVQA) is a signal peptide. Asn77, Asn104, and Asn120 each carry an N-linked (GlcNAc...) asparagine glycan. Residues 111–139 (FTPLPSSSRNETKSSQTTNTISSSTSTGG) form a disordered region. Residues 123 to 137 (KSSQTTNTISSSTST) show a composition bias toward low complexity. Gly139 carries GPI-anchor amidated glycine lipidation. A propeptide spans 140-161 (VGSVKPCLYFVLMLETIAYLFS) (removed in mature form).

Post-translationally, the GPI-anchor is attached to the protein in the endoplasmic reticulum and serves to target the protein to the cell surface. There, the glucosamine-inositol phospholipid moiety is cleaved off and the GPI-modified mannoprotein is covalently attached via its lipidless GPI glycan remnant to the 1,6-beta-glucan of the outer cell wall layer.

Its subcellular location is the secreted. It is found in the cell wall. It localises to the membrane. The protein is Cell wall protein YLR042C of Saccharomyces cerevisiae (strain ATCC 204508 / S288c) (Baker's yeast).